Reading from the N-terminus, the 312-residue chain is Putative HTH-type transcriptional regulatory protein TV0294 (312 aa).

Residues 133-186 form the HTH cro/C1-type domain; the sequence is LRERRNELNLSIGNISSYLGVSRRSVSLYENGSAATIDIFIRLRNILKADIVDH. The segment at residues 144–163 is a DNA-binding region (H-T-H motif); that stretch reads IGNISSYLGVSRRSVSLYEN.

The polypeptide is Putative HTH-type transcriptional regulatory protein TV0294 (Thermoplasma volcanium (strain ATCC 51530 / DSM 4299 / JCM 9571 / NBRC 15438 / GSS1)).